We begin with the raw amino-acid sequence, 255 residues long: Large ribosomal subunit protein uL6m (255 aa).

A disordered region spans residues 39–61 (AARRNFSATTTRPSKLGRTPLSI).

It belongs to the universal ribosomal protein uL6 family. Component of the mitochondrial large ribosomal subunit (mt-LSU). Mature N.crassa 74S mitochondrial ribosomes consist of a small (37S) and a large (54S) subunit. The 37S small subunit contains a 16S ribosomal RNA (16S mt-rRNA) and 32 different proteins. The 54S large subunit contains a 23S rRNA (23S mt-rRNA) and 42 different proteins.

The protein resides in the mitochondrion. Its function is as follows. Component of the mitochondrial ribosome (mitoribosome), a dedicated translation machinery responsible for the synthesis of mitochondrial genome-encoded proteins, including at least some of the essential transmembrane subunits of the mitochondrial respiratory chain. The mitoribosomes are attached to the mitochondrial inner membrane and translation products are cotranslationally integrated into the membrane. This is Large ribosomal subunit protein uL6m (mrpl6) from Neurospora crassa (strain ATCC 24698 / 74-OR23-1A / CBS 708.71 / DSM 1257 / FGSC 987).